Reading from the N-terminus, the 284-residue chain is 2-dehydro-3-deoxyphosphooctonate aldolase (284 aa).

Belongs to the KdsA family.

It is found in the cytoplasm. It catalyses the reaction D-arabinose 5-phosphate + phosphoenolpyruvate + H2O = 3-deoxy-alpha-D-manno-2-octulosonate-8-phosphate + phosphate. It functions in the pathway carbohydrate biosynthesis; 3-deoxy-D-manno-octulosonate biosynthesis; 3-deoxy-D-manno-octulosonate from D-ribulose 5-phosphate: step 2/3. Its pathway is bacterial outer membrane biogenesis; lipopolysaccharide biosynthesis. In Paraburkholderia phymatum (strain DSM 17167 / CIP 108236 / LMG 21445 / STM815) (Burkholderia phymatum), this protein is 2-dehydro-3-deoxyphosphooctonate aldolase.